The primary structure comprises 475 residues: ATP synthase subunit beta, chloroplastic (475 aa).

156 to 163 lines the ATP pocket; that stretch reads GGAGVGKT.

It belongs to the ATPase alpha/beta chains family. In terms of assembly, F-type ATPases have 2 components, CF(1) - the catalytic core - and CF(0) - the membrane proton channel. CF(1) has five subunits: alpha(3), beta(3), gamma(1), delta(1), epsilon(1). CF(0) has four main subunits: a(1), b(1), b'(1) and c(9-12).

Its subcellular location is the plastid. The protein localises to the chloroplast thylakoid membrane. The enzyme catalyses ATP + H2O + 4 H(+)(in) = ADP + phosphate + 5 H(+)(out). Produces ATP from ADP in the presence of a proton gradient across the membrane. The catalytic sites are hosted primarily by the beta subunits. The polypeptide is ATP synthase subunit beta, chloroplastic (Gracilaria tenuistipitata var. liui (Red alga)).